A 91-amino-acid chain; its full sequence is Mercuric transport protein periplasmic component (91 aa).

Residues 1–19 (MKKLLSALALAAVVAPVWA) form the signal peptide. Residues 22–88 (QTVTLSVPGM…ATEDAGYPSS (67 aa)) form the HMA domain. 2 residues coordinate Hg(2+): cysteine 33 and cysteine 36.

This sequence belongs to the MerP family. Monomer.

Its subcellular location is the periplasm. Its function is as follows. Involved in mercury resistance. Acts as a mercury scavenger that specifically binds to a mercuric ion in the periplasm and probably passes it to the cytoplasmic mercuric reductase MerA via the mercuric transport protein MerT. This chain is Mercuric transport protein periplasmic component, found in Pseudomonas fluorescens.